Reading from the N-terminus, the 191-residue chain is Protein GrpE (191 aa).

Belongs to the GrpE family. Homodimer.

It is found in the cytoplasm. In terms of biological role, participates actively in the response to hyperosmotic and heat shock by preventing the aggregation of stress-denatured proteins, in association with DnaK and GrpE. It is the nucleotide exchange factor for DnaK and may function as a thermosensor. Unfolded proteins bind initially to DnaJ; upon interaction with the DnaJ-bound protein, DnaK hydrolyzes its bound ATP, resulting in the formation of a stable complex. GrpE releases ADP from DnaK; ATP binding to DnaK triggers the release of the substrate protein, thus completing the reaction cycle. Several rounds of ATP-dependent interactions between DnaJ, DnaK and GrpE are required for fully efficient folding. The polypeptide is Protein GrpE (Helicobacter pylori (strain P12)).